The primary structure comprises 472 residues: UDP-glucuronosyltransferase (472 aa).

3 N-linked (GlcNAc...) asparagine glycosylation sites follow: Asn-59, Asn-227, and Asn-377. A helical membrane pass occupies residues 436–456 (FGFILLILLTVLWVTLKCCLF).

It belongs to the UDP-glycosyltransferase family.

It localises to the microsome membrane. The protein resides in the endoplasmic reticulum membrane. It catalyses the reaction glucuronate acceptor + UDP-alpha-D-glucuronate = acceptor beta-D-glucuronoside + UDP + H(+). Its function is as follows. UDPGT is of major importance in the conjugation and subsequent elimination of potentially toxic xenobiotics and endogenous compounds. The protein is UDP-glucuronosyltransferase (ugt3) of Pleuronectes platessa (European plaice).